We begin with the raw amino-acid sequence, 231 residues long: Ion-translocating oxidoreductase complex subunit E (231 aa).

The next 6 membrane-spanning stretches (helical) occupy residues Ala18–Ala38, Leu39–Leu59, Thr63–Val83, Leu86–Val106, Ala125–Leu145, and Pro182–Gly202.

The protein belongs to the NqrDE/RnfAE family. The complex is composed of six subunits: RsxA, RsxB, RsxC, RsxD, RsxE and RsxG.

The protein resides in the cell inner membrane. Part of a membrane-bound complex that couples electron transfer with translocation of ions across the membrane. Required to maintain the reduced state of SoxR. This is Ion-translocating oxidoreductase complex subunit E from Escherichia coli O6:K15:H31 (strain 536 / UPEC).